Reading from the N-terminus, the 489-residue chain is Mitochondrial distribution and morphology protein 10 (489 aa).

Belongs to the MDM10 family. As to quaternary structure, component of the ER-mitochondria encounter structure (ERMES) or MDM complex, composed of MMM1, MDM10, MDM12 and MDM34. Associates with the mitochondrial outer membrane sorting assembly machinery SAM(core) complex.

It localises to the mitochondrion outer membrane. Its function is as follows. Component of the ERMES/MDM complex, which serves as a molecular tether to connect the endoplasmic reticulum and mitochondria. Components of this complex are involved in the control of mitochondrial shape and protein biogenesis and may function in phospholipid exchange. MDM10 is involved in the late assembly steps of the general translocase of the mitochondrial outer membrane (TOM complex). Functions in the TOM40-specific route of the assembly of outer membrane beta-barrel proteins, including the association of TOM40 with the receptor TOM22 and small TOM proteins. Can associate with the SAM(core) complex as well as the MDM12-MMM1 complex, both involved in late steps of the major beta-barrel assembly pathway, that is responsible for biogenesis of all outer membrane beta-barrel proteins. May act as a switch that shuttles between both complexes and channels precursor proteins into the TOM40-specific pathway. Plays a role in mitochondrial morphology and in the inheritance of mitochondria. In Arthroderma otae (strain ATCC MYA-4605 / CBS 113480) (Microsporum canis), this protein is Mitochondrial distribution and morphology protein 10.